The primary structure comprises 104 residues: Gastrin (104 aa).

An N-terminal signal peptide occupies residues 1–21 (MQRLCAYVLIHVLALAACSEA). Positions 22–58 (SWKPGFQLQDASSGPGANRGKEPHELDRLGPASHHRR) are excised as a propeptide. Positions 27–67 (FQLQDASSGPGANRGKEPHELDRLGPASHHRRQLGLQGPPH) are disordered. Basic and acidic residues predominate over residues 40–49 (RGKEPHELDR). At Gln-59 the chain carries Pyrrolidone carboxylic acid; in form big gastrin. A Pyrrolidone carboxylic acid; in form gastrin modification is found at Gln-76. The residue at position 87 (Tyr-87) is a Sulfotyrosine; partial. At Phe-92 the chain carries Phenylalanine amide. The residue at position 96 (Ser-96) is a Phosphoserine. The propeptide occupies 96 to 104 (SAEEGDQRP).

It belongs to the gastrin/cholecystokinin family. Sulfation enhances proteolytic processing, and blocks peptide degradation. Levels of sulfation differ between proteolytically-cleaved gastrins. Thus, gastrin-6 is almost 73% sulfated, whereas the larger gastrins are less than 50% sulfated. Sulfation levels are also tissue-specific.

It is found in the secreted. Gastrin stimulates the stomach mucosa to produce and secrete hydrochloric acid and the pancreas to secrete its digestive enzymes. It also stimulates smooth muscle contraction and increases blood circulation and water secretion in the stomach and intestine. The polypeptide is Gastrin (GAST) (Sus scrofa (Pig)).